The chain runs to 630 residues: Eukaryotic translation initiation factor 2-alpha kinase 1 (630 aa).

The interval 1 to 40 (MQGGNSGVRKREEEGDGAGAVAAPPAIDFPAEGPDPEYDE) is disordered. The short motif at 85–104 (LRSRQVFKLLCQTFIKMGLL) is the SIFI-degron element. A Protein kinase domain is found at 167–583 (FEELAILGKG…AIQLLQSELF (417 aa)). ATP is bound by residues 173-181 (LGKGGYGRV) and K196. A disordered region spans residues 259 to 301 (DQEEDREQCGVKNDESSSSSIIFAEPTPEKEKRFGESDTENQN). T285 bears the Phosphothreonine mark. Basic and acidic residues predominate over residues 285-294 (TPEKEKRFGE). Residues 410–415 (ACPYVM) form an HRM 1 repeat. Residue D442 is the Proton acceptor of the active site. Phosphothreonine; by autocatalysis is present on residues T486 and T488. The residue at position 493 (T493) is a Phosphothreonine. An HRM 2 repeat occupies 552–557 (RCPVQA).

This sequence belongs to the protein kinase superfamily. Ser/Thr protein kinase family. GCN2 subfamily. Synthesized in an inactive form that binds to the N-terminal domain of CDC37. Has to be associated with a multiprotein complex containing Hsp90, CDC37 and PPP5C for maturation and activation by autophosphorylation. The phosphatase PPP5C modulates this activation. Homodimer; homodimerizes in presence of heme, forming a disulfide-linked inactive homodimer. Interacts with DELE1; binds both to full-length DELE1 and processed form of DELE1 (S-DELE1) in response to stress, leading to activate its protein kinase activity and trigger the integrated stress response (ISR). Post-translationally, activated by autophosphorylation; phosphorylated predominantly on serine and threonine residues, but also on tyrosine residues. Autophosphorylation at Thr-488 is required for kinase activation. The active autophosphorylated form apparently is largely refractory to cellular heme fluctuations. Ubiquitinated and degraded by the SIFI complex once the mitochondrial stress has been resolved, thereby providing stress response silencing. Within the SIFI complex, UBR4 initiates ubiquitin chain that are further elongated or branched by KCMF1.

It carries out the reaction L-seryl-[protein] + ATP = O-phospho-L-seryl-[protein] + ADP + H(+). It catalyses the reaction L-threonyl-[protein] + ATP = O-phospho-L-threonyl-[protein] + ADP + H(+). With respect to regulation, in normal conditions, the protein kinase activity is inhibited; inhibition is relieved by various stress conditions. Inhibited by heme: in presence of heme, forms a disulfide-linked inactive homodimer. Heme depletion relieves inhibition and stimulates kinase activity by autophosphorylation. Inhibited by the heme metabolites biliverdin and bilirubin. Induced by oxidative stress generated by arsenite treatment. Binding of nitric oxide (NO) to the heme iron in the N-terminal heme-binding domain activates the kinase activity, while binding of carbon monoxide (CO) suppresses kinase activity. Protein kinase activity is also activated upon binding to DELE1 in response to various stress, triggering the integrated stress response (ISR): activated by full-length DELE1 in response to iron deficiency, while it is activated by the processed form of DELE1 (S-DELE1) in response to mitochondrial stress. Functionally, metabolic-stress sensing protein kinase that phosphorylates the alpha subunit of eukaryotic translation initiation factor 2 (EIF2S1/eIF-2-alpha) in response to various stress conditions. Key activator of the integrated stress response (ISR) required for adaptation to various stress, such as heme deficiency, oxidative stress, osmotic shock, mitochondrial dysfunction and heat shock. EIF2S1/eIF-2-alpha phosphorylation in response to stress converts EIF2S1/eIF-2-alpha in a global protein synthesis inhibitor, leading to a global attenuation of cap-dependent translation, while concomitantly initiating the preferential translation of ISR-specific mRNAs, such as the transcriptional activator ATF4, and hence allowing ATF4-mediated reprogramming. Acts as a key sensor of heme-deficiency: in normal conditions, binds hemin via a cysteine thiolate and histidine nitrogenous coordination, leading to inhibit the protein kinase activity. This binding occurs with moderate affinity, allowing it to sense the heme concentration within the cell: heme depletion relieves inhibition and stimulates kinase activity, activating the ISR. Thanks to this unique heme-sensing capacity, plays a crucial role to shut off protein synthesis during acute heme-deficient conditions. In red blood cells (RBCs), controls hemoglobin synthesis ensuring a coordinated regulation of the synthesis of its heme and globin moieties. It thereby plays an essential protective role for RBC survival in anemias of iron deficiency. Iron deficiency also triggers activation by full-length DELE1. Also activates the ISR in response to mitochondrial dysfunction: HRI/EIF2AK1 protein kinase activity is activated upon binding to the processed form of DELE1 (S-DELE1), thereby promoting the ATF4-mediated reprogramming. Also acts as an activator of mitophagy in response to mitochondrial damage: catalyzes phosphorylation of eIF-2-alpha (EIF2S1) following activation by S-DELE1, thereby promoting mitochondrial localization of EIF2S1, triggering PRKN-independent mitophagy. The chain is Eukaryotic translation initiation factor 2-alpha kinase 1 from Homo sapiens (Human).